A 490-amino-acid polypeptide reads, in one-letter code: Scarecrow-like transcription factor PAT1 (490 aa).

The region spanning 110-490 is the GRAS domain; it reads TLEAISRRDL…RDLVASCAWK (381 aa). Residues 117–178 form a leucine repeat I (LRI) region; sequence RDLRADLVSC…AQLASSGSSI (62 aa). The tract at residues 197–262 is VHIID; sequence MHILYEVCPY…GGPPRIRITG (66 aa). Positions 228-232 match the VHIID motif; it reads VHIID. Residues 278 to 310 are leucine repeat II (LRII); sequence IVGNRLAKLAKQFNVPFEFNSVSVSVSEVKPKN. The segment at 319–413 is PFYRE; the sequence is LAVNFAFVLH…QHCLARDVVN (95 aa). Residues 416–490 form an SAW region; that stretch reads ACEGADRVER…RDLVASCAWK (75 aa).

It belongs to the GRAS family.

The protein resides in the cytoplasm. Functionally, probable transcription factor involved in phytochrome A (phyA) signal transduction. The polypeptide is Scarecrow-like transcription factor PAT1 (PAT1) (Arabidopsis thaliana (Mouse-ear cress)).